Reading from the N-terminus, the 68-residue chain is FSRKTWRIFLQVYVIGGDGTMRGAVVIFEEFKRCRLRISITGIPKNLDNDIEIIDKAFGFQTAVESAQ.

17–20 (GDGT) contacts ATP. Aspartate 18 provides a ligand contact to Mg(2+). Residue aspartate 48 is the Proton acceptor of the active site.

The protein belongs to the phosphofructokinase type A (PFKA) family. PPi-dependent PFK group II subfamily. Atypical ATP-dependent clade 'X' sub-subfamily. Homotetramer. The cofactor is Mg(2+).

The protein localises to the cytoplasm. The enzyme catalyses beta-D-fructose 6-phosphate + ATP = beta-D-fructose 1,6-bisphosphate + ADP + H(+). It participates in carbohydrate degradation; glycolysis; D-glyceraldehyde 3-phosphate and glycerone phosphate from D-glucose: step 3/4. Allosterically activated by AMP. Catalyzes the phosphorylation of D-fructose 6-phosphate to fructose 1,6-bisphosphate by ATP, the first committing step of glycolysis. The chain is ATP-dependent 6-phosphofructokinase (PFK) from Triticum aestivum (Wheat).